The sequence spans 422 residues: F-box protein At3g12350 (422 aa).

The 48-residue stretch at 5–52 (ALPFCEIPEDLQLRILSLLTPAEISSFACTSKRFASLCQEDGKIWHVM) folds into the F-box domain. Basic and acidic residues-rich tracts occupy residues 197-207 (NNRREDQRSSG) and 242-252 (KEKERQASRTK). Disordered regions lie at residues 197 to 216 (NNRREDQRSSGDESDDLISS) and 226 to 252 (LANKTSPGGDRRRQKRKEKERQASRTK).

The sequence is that of F-box protein At3g12350 from Arabidopsis thaliana (Mouse-ear cress).